The chain runs to 179 residues: Orotate phosphoribosyltransferase (179 aa).

5-phospho-alpha-D-ribose 1-diphosphate is bound by residues R94, K95, K98, H100, and 120 to 128 (EDTSTTGNS). The orotate site is built by T124 and R152.

The protein belongs to the purine/pyrimidine phosphoribosyltransferase family. PyrE subfamily. As to quaternary structure, homodimer. Requires Mg(2+) as cofactor.

It catalyses the reaction orotidine 5'-phosphate + diphosphate = orotate + 5-phospho-alpha-D-ribose 1-diphosphate. It participates in pyrimidine metabolism; UMP biosynthesis via de novo pathway; UMP from orotate: step 1/2. In terms of biological role, catalyzes the transfer of a ribosyl phosphate group from 5-phosphoribose 1-diphosphate to orotate, leading to the formation of orotidine monophosphate (OMP). This chain is Orotate phosphoribosyltransferase, found in Mycobacterium avium (strain 104).